Consider the following 62-residue polypeptide: Photosystem II reaction center protein Z (62 aa).

The next 2 membrane-spanning stretches (helical) occupy residues Ala-8–Ala-28 and Trp-41–Val-61.

This sequence belongs to the PsbZ family. In terms of assembly, PSII is composed of 1 copy each of membrane proteins PsbA, PsbB, PsbC, PsbD, PsbE, PsbF, PsbH, PsbI, PsbJ, PsbK, PsbL, PsbM, PsbT, PsbX, PsbY, PsbZ, Psb30/Ycf12, peripheral proteins PsbO, CyanoQ (PsbQ), PsbU, PsbV and a large number of cofactors. It forms dimeric complexes.

It localises to the cellular thylakoid membrane. In terms of biological role, may control the interaction of photosystem II (PSII) cores with the light-harvesting antenna, regulates electron flow through the 2 photosystem reaction centers. PSII is a light-driven water plastoquinone oxidoreductase, using light energy to abstract electrons from H(2)O, generating a proton gradient subsequently used for ATP formation. The chain is Photosystem II reaction center protein Z from Gloeothece citriformis (strain PCC 7424) (Cyanothece sp. (strain PCC 7424)).